Reading from the N-terminus, the 393-residue chain is Methylthioribose kinase (393 aa).

ATP contacts are provided by residues Asn38, Lys53, and Glu107–Leu109. Residue Asp225 participates in substrate binding. Asp242–Glu244 contacts ATP. Substrate is bound at residue Arg332.

It belongs to the methylthioribose kinase family. As to quaternary structure, homodimer.

The catalysed reaction is 5-(methylsulfanyl)-D-ribose + ATP = 5-(methylsulfanyl)-alpha-D-ribose 1-phosphate + ADP + H(+). The protein operates within amino-acid biosynthesis; L-methionine biosynthesis via salvage pathway; S-methyl-5-thio-alpha-D-ribose 1-phosphate from S-methyl-5'-thioadenosine (hydrolase route): step 2/2. Catalyzes the phosphorylation of methylthioribose into methylthioribose-1-phosphate. This chain is Methylthioribose kinase, found in Bacillus thuringiensis subsp. konkukian (strain 97-27).